The following is a 146-amino-acid chain: Ecotin-like protein 1 (146 aa).

The protein belongs to the protease inhibitor I11 (ecotin) family.

This chain is Ecotin-like protein 1 (ISP1), found in Leishmania braziliensis.